The following is a 1291-amino-acid chain: Vacuolating cytotoxin autotransporter (1291 aa).

Positions 1 to 33 (MEIQQTHRKINRPLVSLALVGALVSITPQQSHA) are cleaved as a signal peptide. Positions 326–374 (PPEGGYKDKPNDKPSNTTQNNAKNDKQESSQNNSNTQVINPPNSAQKTE) are disordered. Polar residues-rich tracts occupy residues 338 to 347 (KPSNTTQNNA) and 354 to 374 (SSQN…QKTE). The region spanning 1018-1291 (KYEKPTNVWA…ASNLGMRYSF (274 aa)) is the Autotransporter domain.

It is found in the periplasm. The protein resides in the secreted. It localises to the cell surface. Its subcellular location is the cell outer membrane. Functionally, induces vacuolation of eukaryotic cells. Causes ulceration and gastric lesions. This chain is Vacuolating cytotoxin autotransporter (vacA), found in Helicobacter pylori (Campylobacter pylori).